A 224-amino-acid polypeptide reads, in one-letter code: Biosynthetic peptidoglycan transglycosylase (224 aa).

A helical membrane pass occupies residues I12–V32.

Belongs to the glycosyltransferase 51 family.

The protein localises to the cell inner membrane. It catalyses the reaction [GlcNAc-(1-&gt;4)-Mur2Ac(oyl-L-Ala-gamma-D-Glu-L-Lys-D-Ala-D-Ala)](n)-di-trans,octa-cis-undecaprenyl diphosphate + beta-D-GlcNAc-(1-&gt;4)-Mur2Ac(oyl-L-Ala-gamma-D-Glu-L-Lys-D-Ala-D-Ala)-di-trans,octa-cis-undecaprenyl diphosphate = [GlcNAc-(1-&gt;4)-Mur2Ac(oyl-L-Ala-gamma-D-Glu-L-Lys-D-Ala-D-Ala)](n+1)-di-trans,octa-cis-undecaprenyl diphosphate + di-trans,octa-cis-undecaprenyl diphosphate + H(+). It functions in the pathway cell wall biogenesis; peptidoglycan biosynthesis. Peptidoglycan polymerase that catalyzes glycan chain elongation from lipid-linked precursors. The chain is Biosynthetic peptidoglycan transglycosylase from Brucella melitensis biotype 1 (strain ATCC 23456 / CCUG 17765 / NCTC 10094 / 16M).